The primary structure comprises 428 residues: 3-phosphoshikimate 1-carboxyvinyltransferase (428 aa).

3 residues coordinate 3-phosphoshikimate: K21, S22, and R26. K21 contributes to the phosphoenolpyruvate binding site. Phosphoenolpyruvate contacts are provided by G93 and R121. Residues S166, Q168, D314, and K341 each coordinate 3-phosphoshikimate. Residue Q168 coordinates phosphoenolpyruvate. D314 acts as the Proton acceptor in catalysis. 2 residues coordinate phosphoenolpyruvate: R345 and R388.

It belongs to the EPSP synthase family. In terms of assembly, monomer.

It is found in the cytoplasm. The enzyme catalyses 3-phosphoshikimate + phosphoenolpyruvate = 5-O-(1-carboxyvinyl)-3-phosphoshikimate + phosphate. It participates in metabolic intermediate biosynthesis; chorismate biosynthesis; chorismate from D-erythrose 4-phosphate and phosphoenolpyruvate: step 6/7. Catalyzes the transfer of the enolpyruvyl moiety of phosphoenolpyruvate (PEP) to the 5-hydroxyl of shikimate-3-phosphate (S3P) to produce enolpyruvyl shikimate-3-phosphate and inorganic phosphate. In Syntrophomonas wolfei subsp. wolfei (strain DSM 2245B / Goettingen), this protein is 3-phosphoshikimate 1-carboxyvinyltransferase.